Here is a 451-residue protein sequence, read N- to C-terminus: Methionine aminopeptidase 2-2 (451 aa).

The segment at 1–101 is disordered; sequence MAAKVADDVA…IDEVFPNDSY (101 aa). A compositionally biased stretch (acidic residues) spans 37–51; that stretch reads EHEDSDDDNEAEEGA. Positions 60-73 are enriched in basic residues; sequence KKKKKRKPRKKKKA. H204 contacts substrate. Positions 224, 235, and 304 each coordinate a divalent metal cation. H312 lines the substrate pocket. A divalent metal cation contacts are provided by E337 and E432.

The protein belongs to the peptidase M24A family. Methionine aminopeptidase eukaryotic type 2 subfamily. The cofactor is Co(2+). It depends on Zn(2+) as a cofactor. Mn(2+) is required as a cofactor. Fe(2+) serves as cofactor.

It localises to the cytoplasm. The catalysed reaction is Release of N-terminal amino acids, preferentially methionine, from peptides and arylamides.. Cotranslationally removes the N-terminal methionine from nascent proteins. The N-terminal methionine is often cleaved when the second residue in the primary sequence is small and uncharged (Met-Ala-, Cys, Gly, Pro, Ser, Thr, or Val). The protein is Methionine aminopeptidase 2-2 of Pyrenophora tritici-repentis (strain Pt-1C-BFP) (Wheat tan spot fungus).